A 380-amino-acid polypeptide reads, in one-letter code: Chaperone protein DnaJ (380 aa).

A J domain is found at 5–69; it reads DFYEVLGVGR…QKKAAYDQYG (65 aa). Residues 135–213 form a CR-type zinc finger; sequence GCSKEIRVPT…CHGQGRVEKT (79 aa). Zn(2+) contacts are provided by Cys148, Cys151, Cys165, Cys168, Cys187, Cys190, Cys201, and Cys204. CXXCXGXG motif repeat units lie at residues 148 to 155, 165 to 172, 187 to 194, and 201 to 208; these read CDSCDGSG, CGTCHGQG, CPHCHGRG, and CNSCHGQG.

Belongs to the DnaJ family. In terms of assembly, homodimer. The cofactor is Zn(2+).

Its subcellular location is the cytoplasm. Participates actively in the response to hyperosmotic and heat shock by preventing the aggregation of stress-denatured proteins and by disaggregating proteins, also in an autonomous, DnaK-independent fashion. Unfolded proteins bind initially to DnaJ; upon interaction with the DnaJ-bound protein, DnaK hydrolyzes its bound ATP, resulting in the formation of a stable complex. GrpE releases ADP from DnaK; ATP binding to DnaK triggers the release of the substrate protein, thus completing the reaction cycle. Several rounds of ATP-dependent interactions between DnaJ, DnaK and GrpE are required for fully efficient folding. Also involved, together with DnaK and GrpE, in the DNA replication of plasmids through activation of initiation proteins. This Photobacterium profundum (strain SS9) protein is Chaperone protein DnaJ.